The sequence spans 35 residues: Cytochrome b6-f complex subunit 5 (35 aa).

Residues 5-25 traverse the membrane as a helical segment; it reads LLCGIVLGLIPVTLTGLFVAA.

This sequence belongs to the PetG family. The 4 large subunits of the cytochrome b6-f complex are cytochrome b6, subunit IV (17 kDa polypeptide, PetD), cytochrome f and the Rieske protein, while the 4 small subunits are PetG, PetL, PetM and PetN. The complex functions as a dimer.

The protein resides in the plastid. It is found in the organellar chromatophore thylakoid membrane. In terms of biological role, component of the cytochrome b6-f complex, which mediates electron transfer between photosystem II (PSII) and photosystem I (PSI), cyclic electron flow around PSI, and state transitions. PetG is required for either the stability or assembly of the cytochrome b6-f complex. This is Cytochrome b6-f complex subunit 5 from Paulinella chromatophora.